Reading from the N-terminus, the 401-residue chain is Hemorrhagic metalloproteinase-disintegrin-like kaouthiagin (401 aa).

Residues 14–208 (KYIEFYVIVD…DRPQCILNKP (195 aa)) form the Peptidase M12B domain. Ca(2+) contacts are provided by Glu17 and Asp101. An N-linked (GlcNAc...) asparagine glycan is attached at Asn112. 3 disulfide bridges follow: Cys125–Cys203, Cys164–Cys187, and Cys166–Cys171. His149 contacts Zn(2+). The active site involves Glu150. Residues His153 and His159 each coordinate Zn(2+). The Ca(2+) site is built by Cys203, Asn206, Ile218, Asn221, Phe223, Glu225, Glu228, and Asp231. Positions 216-285 (PAICGNYFVE…ECPTDSLQRN (70 aa)) constitute a Disintegrin domain. 11 cysteine pairs are disulfide-bonded: Cys219/Cys248, Cys230/Cys243, Cys232/Cys238, Cys257/Cys277, Cys264/Cys296, Cys289/Cys301, Cys308/Cys358, Cys323/Cys366, Cys336/Cys346, Cys353/Cys389, and Cys383/Cys394. Residues 263 to 265 (DCD) carry the D/ECD-tripeptide motif. Ca(2+) is bound by residues Asp265, Leu266, Glu268, and Asp280.

This sequence belongs to the venom metalloproteinase (M12B) family. P-III subfamily. P-IIIa sub-subfamily. As to quaternary structure, monomer. Zn(2+) is required as a cofactor. Expressed by the venom gland.

Its subcellular location is the secreted. Its function is as follows. Snake venom zinc protease that inhibits hemostasis by binding and cleaving the vWF in humans. Also has and inhibitory effect on the collagen-induced platelet aggregation. The chain is Hemorrhagic metalloproteinase-disintegrin-like kaouthiagin from Naja kaouthia (Monocled cobra).